Consider the following 740-residue polypeptide: Isocitrate dehydrogenase [NADP] 2 (740 aa).

NADP(+)-binding residues include asparagine 83 and serine 85. The D-threo-isocitrate site is built by serine 130, asparagine 133, arginine 137, arginine 143, and lysine 253. Asparagine 133 contacts NADP(+). Aspartate 348 contacts Mg(2+). Residues tyrosine 418 and arginine 546 each contribute to the D-threo-isocitrate site. Residues aspartate 547 and aspartate 551 each coordinate Mg(2+). The NADP(+) site is built by serine 584, histidine 588, arginine 599, aspartate 601, and arginine 648.

The protein belongs to the monomeric-type IDH family. As to quaternary structure, monomer. Requires Mg(2+) as cofactor. Mn(2+) serves as cofactor.

It catalyses the reaction D-threo-isocitrate + NADP(+) = 2-oxoglutarate + CO2 + NADPH. Its activity is regulated as follows. IDH activity is not significantly affected by monovalent cations. The combined addition of Mn(2+) and another divalent cation results in the decrease of the activity. Catalyzes the oxidative decarboxylation of isocitrate to 2-oxoglutarate and carbon dioxide with the concomitant reduction of NADP(+). Cannot use NAD(+). This Psychrobacter sp. (strain 13A) protein is Isocitrate dehydrogenase [NADP] 2.